We begin with the raw amino-acid sequence, 200 residues long: Superoxide dismutase [Mn] 1 (200 aa).

Residues H29, H76, D158, and H162 each contribute to the Mn(2+) site.

The protein belongs to the iron/manganese superoxide dismutase family. Requires Mn(2+) as cofactor.

The enzyme catalyses 2 superoxide + 2 H(+) = H2O2 + O2. In terms of biological role, destroys superoxide anion radicals which are normally produced within the cells and which are toxic to biological systems. The protein is Superoxide dismutase [Mn] 1 (sod1) of Haloferax volcanii (strain ATCC 29605 / DSM 3757 / JCM 8879 / NBRC 14742 / NCIMB 2012 / VKM B-1768 / DS2) (Halobacterium volcanii).